The primary structure comprises 267 residues: Tryptophan synthase alpha chain (267 aa).

Catalysis depends on proton acceptor residues Glu43 and Asp54.

Belongs to the TrpA family. In terms of assembly, tetramer of two alpha and two beta chains.

The catalysed reaction is (1S,2R)-1-C-(indol-3-yl)glycerol 3-phosphate + L-serine = D-glyceraldehyde 3-phosphate + L-tryptophan + H2O. It participates in amino-acid biosynthesis; L-tryptophan biosynthesis; L-tryptophan from chorismate: step 5/5. In terms of biological role, the alpha subunit is responsible for the aldol cleavage of indoleglycerol phosphate to indole and glyceraldehyde 3-phosphate. This Bacillus subtilis subsp. natto protein is Tryptophan synthase alpha chain.